A 425-amino-acid polypeptide reads, in one-letter code: Ribulose bisphosphate carboxylase/oxygenase activase B, chloroplastic (425 aa).

A chloroplast-targeting transit peptide spans 1–43 (MASAFSSTVGAPASTPTIFLGKKVKNYYHGGNKMKSRVVRVMA). 153–160 (GGKGQGKS) is a binding site for ATP.

The protein belongs to the RuBisCO activase family.

The protein resides in the plastid. The protein localises to the chloroplast stroma. Functionally, activation of RuBisCO (ribulose-1,5-bisphosphate carboxylase/oxygenase; EC 4.1.1.39) involves the ATP-dependent carboxylation of the epsilon-amino group of lysine leading to a carbamate structure. The sequence is that of Ribulose bisphosphate carboxylase/oxygenase activase B, chloroplastic (RCAB) from Hordeum vulgare (Barley).